The chain runs to 132 residues: UPF0299 membrane protein YohJ (132 aa).

The Periplasmic portion of the chain corresponds to 1 to 6 (MSKTLN). A helical membrane pass occupies residues 7-27 (IIWQYLRAFVLIYACLYAGIF). The Cytoplasmic segment spans residues 28-30 (IAS). Residues 31 to 51 (LLPVTIPGSIIGMLILFVLLA) form a helical membrane-spanning segment. The Periplasmic portion of the chain corresponds to 52–62 (LQILPAKWVNP). Residues 63–83 (GCYVLIRYMALLFVPIGVGVM) traverse the membrane as a helical segment. At 84–92 (QYFDLLRAQ) the chain is on the cytoplasmic side. A helical transmembrane segment spans residues 93–113 (FGPVVVSCAISTLVVFLVVSW). Residues 114–132 (SSQLVHGERKVVGQKGSEE) are Periplasmic-facing.

Belongs to the UPF0299 family.

The protein resides in the cell inner membrane. This chain is UPF0299 membrane protein YohJ (yohJ), found in Escherichia coli O157:H7.